The chain runs to 89 residues: Small ribosomal subunit protein uS15 (89 aa).

The span at 1-11 shows a compositional bias: basic and acidic residues; that stretch reads MSIAAERKAEV. The tract at residues 1 to 25 is disordered; the sequence is MSIAAERKAEVIKTSANKPGDTGSP.

This sequence belongs to the universal ribosomal protein uS15 family. In terms of assembly, part of the 30S ribosomal subunit. Forms a bridge to the 50S subunit in the 70S ribosome, contacting the 23S rRNA.

Its function is as follows. One of the primary rRNA binding proteins, it binds directly to 16S rRNA where it helps nucleate assembly of the platform of the 30S subunit by binding and bridging several RNA helices of the 16S rRNA. In terms of biological role, forms an intersubunit bridge (bridge B4) with the 23S rRNA of the 50S subunit in the ribosome. This Nitrobacter winogradskyi (strain ATCC 25391 / DSM 10237 / CIP 104748 / NCIMB 11846 / Nb-255) protein is Small ribosomal subunit protein uS15.